Here is a 79-residue protein sequence, read N- to C-terminus: MKQTIVIVLLAAVAMMACLQMVAAEPLPEAAPAPSPLAEAEALASPIAEALANPEALASPEAGRILSFIKGLAEHLGKK.

The N-terminal stretch at M1–A24 is a signal peptide. 5 AXPX repeats span residues A24–L27, A30–A33, A44–I47, A52–E55, and A58–E61. The propeptide occupies E25–A62. L76 carries the post-translational modification Leucine amide.

In terms of tissue distribution, expressed by the venom gland.

Its subcellular location is the secreted. It localises to the target cell membrane. Antimicrobial peptide with strong activity against the fungi C.albicans (MIC=6 uM) and B.cinerea (MIC=10 uM), and weaker activity against the Gram-negative bacterium E.coli (MIC=97 uM) and Gram-positive bacterium S.aureus (MIC=97 uM). Shows cytolytic activity against insect cell lines. Has potent hemolytic activity against ovine erythrocytes (80% at 50 uM), but has no hemolytic activity against human erythrocytes. In vivo, peptide injection in the vicinity of the head and thorax of lepidopteran larvae induces feeding disorder that lasts one or two days before recovering. The sequence is that of Eumenine mastoparan-OD from Orancistrocerus drewseni (Solitary wasp).